Here is a 248-residue protein sequence, read N- to C-terminus: 2,3-bisphosphoglycerate-dependent phosphoglycerate mutase (248 aa).

Substrate is bound by residues 8 to 15 (RHGESTWN), 21 to 22 (TG), Arg-60, 87 to 90 (ERHY), Lys-98, 114 to 115 (RR), and 183 to 184 (GN). Catalysis depends on His-9, which acts as the Tele-phosphohistidine intermediate. The active-site Proton donor/acceptor is Glu-87.

It belongs to the phosphoglycerate mutase family. BPG-dependent PGAM subfamily. Homodimer.

The enzyme catalyses (2R)-2-phosphoglycerate = (2R)-3-phosphoglycerate. Its pathway is carbohydrate degradation; glycolysis; pyruvate from D-glyceraldehyde 3-phosphate: step 3/5. In terms of biological role, catalyzes the interconversion of 2-phosphoglycerate and 3-phosphoglycerate. The polypeptide is 2,3-bisphosphoglycerate-dependent phosphoglycerate mutase (Burkholderia ambifaria (strain ATCC BAA-244 / DSM 16087 / CCUG 44356 / LMG 19182 / AMMD) (Burkholderia cepacia (strain AMMD))).